We begin with the raw amino-acid sequence, 146 residues long: Large ribosomal subunit protein uL15 (146 aa).

Residues 1-66 are disordered; the sequence is MKLHELKPAP…LQRRMPKRGF (66 aa). Gly residues-rich tracts occupy residues 21–31 and 42–52; these read QGIGSGMGKTA and SGGGVRPGFEG.

This sequence belongs to the universal ribosomal protein uL15 family. As to quaternary structure, part of the 50S ribosomal subunit.

Binds to the 23S rRNA. The sequence is that of Large ribosomal subunit protein uL15 from Pelotomaculum thermopropionicum (strain DSM 13744 / JCM 10971 / SI).